A 114-amino-acid polypeptide reads, in one-letter code: DNA-directed RNA polymerase subunit Rpo4 (114 aa).

It belongs to the eukaryotic RPB4 RNA polymerase subunit family. As to quaternary structure, part of the 13-subunit RNA polymerase complex. Forms a stalk with Rpo7 that extends from the main structure. Post-translationally, in purified enzyme appears as 5 forms, each differing by about 200 Da of a covalently bound, negatively charged residue. Not glycosylated.

The protein localises to the cytoplasm. It carries out the reaction RNA(n) + a ribonucleoside 5'-triphosphate = RNA(n+1) + diphosphate. Its function is as follows. DNA-dependent RNA polymerase catalyzes the transcription of DNA into RNA using the four ribonucleoside triphosphates as substrates. This subunit is less well bound than the others. Probably not involved in transcription initiation. The polypeptide is DNA-directed RNA polymerase subunit Rpo4 (Sulfolobus acidocaldarius (strain ATCC 33909 / DSM 639 / JCM 8929 / NBRC 15157 / NCIMB 11770)).